The sequence spans 444 residues: Xaa-Pro dipeptidase (444 aa).

Residues aspartate 247, aspartate 258, histidine 340, glutamate 385, and glutamate 424 each contribute to the Mn(2+) site.

It belongs to the peptidase M24B family. Bacterial-type prolidase subfamily. The cofactor is Mn(2+).

The enzyme catalyses Xaa-L-Pro dipeptide + H2O = an L-alpha-amino acid + L-proline. Functionally, splits dipeptides with a prolyl residue in the C-terminal position. The chain is Xaa-Pro dipeptidase from Photorhabdus laumondii subsp. laumondii (strain DSM 15139 / CIP 105565 / TT01) (Photorhabdus luminescens subsp. laumondii).